A 251-amino-acid polypeptide reads, in one-letter code: Hydroxyacylglutathione hydrolase (251 aa).

Residues His53, His55, Asp57, His58, His110, Asp127, and His165 each coordinate Zn(2+).

It belongs to the metallo-beta-lactamase superfamily. Glyoxalase II family. Monomer. The cofactor is Zn(2+).

The catalysed reaction is an S-(2-hydroxyacyl)glutathione + H2O = a 2-hydroxy carboxylate + glutathione + H(+). The protein operates within secondary metabolite metabolism; methylglyoxal degradation; (R)-lactate from methylglyoxal: step 2/2. Functionally, thiolesterase that catalyzes the hydrolysis of S-D-lactoyl-glutathione to form glutathione and D-lactic acid. This Escherichia coli O6:K15:H31 (strain 536 / UPEC) protein is Hydroxyacylglutathione hydrolase.